The primary structure comprises 356 residues: Mannonate dehydratase (356 aa).

It belongs to the mannonate dehydratase family. Fe(2+) is required as a cofactor. The cofactor is Mn(2+).

It carries out the reaction D-mannonate = 2-dehydro-3-deoxy-D-gluconate + H2O. It participates in carbohydrate metabolism; pentose and glucuronate interconversion. In terms of biological role, catalyzes the dehydration of D-mannonate. The protein is Mannonate dehydratase of Levilactobacillus brevis (strain ATCC 367 / BCRC 12310 / CIP 105137 / JCM 1170 / LMG 11437 / NCIMB 947 / NCTC 947) (Lactobacillus brevis).